We begin with the raw amino-acid sequence, 402 residues long: CCA-adding enzyme (402 aa).

ATP contacts are provided by glycine 32 and arginine 35. Positions 32 and 35 each coordinate CTP. Mg(2+)-binding residues include aspartate 45 and aspartate 47. ATP is bound by residues arginine 116, aspartate 159, arginine 162, arginine 165, and arginine 168. CTP contacts are provided by arginine 116, aspartate 159, arginine 162, arginine 165, and arginine 168.

Belongs to the tRNA nucleotidyltransferase/poly(A) polymerase family. Bacterial CCA-adding enzyme type 3 subfamily. In terms of assembly, homodimer. The cofactor is Mg(2+).

The catalysed reaction is a tRNA precursor + 2 CTP + ATP = a tRNA with a 3' CCA end + 3 diphosphate. It catalyses the reaction a tRNA with a 3' CCA end + 2 CTP + ATP = a tRNA with a 3' CCACCA end + 3 diphosphate. Functionally, catalyzes the addition and repair of the essential 3'-terminal CCA sequence in tRNAs without using a nucleic acid template. Adds these three nucleotides in the order of C, C, and A to the tRNA nucleotide-73, using CTP and ATP as substrates and producing inorganic pyrophosphate. tRNA 3'-terminal CCA addition is required both for tRNA processing and repair. Also involved in tRNA surveillance by mediating tandem CCA addition to generate a CCACCA at the 3' terminus of unstable tRNAs. While stable tRNAs receive only 3'-terminal CCA, unstable tRNAs are marked with CCACCA and rapidly degraded. This is CCA-adding enzyme from Streptococcus pyogenes serotype M3 (strain ATCC BAA-595 / MGAS315).